The sequence spans 162 residues: Caveolin-2 (162 aa).

At methionine 1–lysine 86 the chain is on the cytoplasmic side. Tyrosine 19 carries the phosphotyrosine; by SRC modification. Serine 20 and serine 23 each carry phosphoserine. Tyrosine 27 carries the post-translational modification Phosphotyrosine; by SRC. Serine 36 is modified (phosphoserine). The segment at residues phenylalanine 87–leucine 107 is an intramembrane region (helical). The Cytoplasmic segment spans residues serine 108 to aspartate 162.

Belongs to the caveolin family. In terms of assembly, monomer or homodimer. Interacts with CAV1; the interaction forms a stable heterooligomeric complex that is required for targeting to lipid rafts and for caveolae formation. Tyrosine phosphorylated forms do not form heterooligomers with the Tyr-19-phosphorylated form existing as a monomer or dimer, and the Tyr-27-form as a monomer only. Interacts (tyrosine phosphorylated form) with the SH2 domain-containing proteins, RASA1, NCK1 and SRC. Interacts (tyrosine phosphorylated form) with INSR, the interaction (Tyr-27-phosphorylated form) is increased on insulin stimulation. Interacts (Tyr-19 phosphorylated form) with MAPK1 (phosphorylated form); the interaction, promoted by insulin, leads to nuclear location and MAPK1 activation. Interacts with STAT3; the interaction is increased on insulin-induced tyrosine phosphorylation leading to STAT activation. Post-translationally, phosphorylated on serine and tyrosine residues. CAV1 promotes phosphorylation on Ser-23 which then targets the complex to the plasma membrane, lipid rafts and caveolae. Phosphorylation on Ser-36 appears to modulate mitosis in endothelial cells. Phosphorylation on both Tyr-19 and Tyr-27 is required for insulin-induced 'Ser-727' phosphorylation of STAT3 and its activation. Phosphorylation on Tyr-19 is required for insulin-induced phosphorylation of MAPK1 and DNA binding of STAT3. Tyrosine phosphorylation is induced by both EGF and insulin (By. similarity).

The protein resides in the nucleus. It is found in the cytoplasm. Its subcellular location is the golgi apparatus membrane. The protein localises to the cell membrane. It localises to the membrane. The protein resides in the caveola. Functionally, may act as a scaffolding protein within caveolar membranes. Interacts directly with G-protein alpha subunits and can functionally regulate their activity. Acts as an accessory protein in conjunction with CAV1 in targeting to lipid rafts and driving caveolae formation. The Ser-36 phosphorylated form has a role in modulating mitosis in endothelial cells. Positive regulator of cellular mitogenesis of the MAPK signaling pathway. Required for the insulin-stimulated nuclear translocation and activation of MAPK1 and STAT3, and the subsequent regulation of cell cycle progression. The sequence is that of Caveolin-2 (CAV2) from Gorilla gorilla gorilla (Western lowland gorilla).